The primary structure comprises 284 residues: Tropomyosin, smooth muscle/fibroblast CTM1 (284 aa).

Positions 1–284 form a coiled coil; the sequence is MEAIKKKMTM…DVTLQGIGDL (284 aa). The disordered stretch occupies residues 18 to 38; the sequence is AIDRAEQAETDKKSAEDKATG.

It belongs to the tropomyosin family. As to quaternary structure, homodimer. Predominantly expressed in body wall muscle and heart, low in intestine, ovary and larval tail muscle.

The function of tropomyosin in smooth muscle and non-muscle cells is not clear. The chain is Tropomyosin, smooth muscle/fibroblast CTM1 (CTM1) from Ciona intestinalis (Transparent sea squirt).